The primary structure comprises 94 residues: Small ribosomal subunit protein uS19c (94 aa).

Belongs to the universal ribosomal protein uS19 family.

The protein resides in the plastid. Functionally, protein S19 forms a complex with S13 that binds strongly to the 16S ribosomal RNA. The polypeptide is Small ribosomal subunit protein uS19c (rps19) (Epifagus virginiana (Beechdrops)).